We begin with the raw amino-acid sequence, 455 residues long: Argininosuccinate lyase (455 aa).

Belongs to the lyase 1 family. Argininosuccinate lyase subfamily.

The protein localises to the cytoplasm. The catalysed reaction is 2-(N(omega)-L-arginino)succinate = fumarate + L-arginine. It participates in amino-acid biosynthesis; L-arginine biosynthesis; L-arginine from L-ornithine and carbamoyl phosphate: step 3/3. In Shewanella sp. (strain ANA-3), this protein is Argininosuccinate lyase.